The following is a 321-amino-acid chain: tRNA U34 carboxymethyltransferase (321 aa).

Carboxy-S-adenosyl-L-methionine is bound by residues lysine 90, tryptophan 104, lysine 109, glycine 129, aspartate 151–threonine 153, isoleucine 180–glutamate 181, methionine 195, tyrosine 199, and arginine 314.

This sequence belongs to the class I-like SAM-binding methyltransferase superfamily. CmoB family. In terms of assembly, homotetramer.

It carries out the reaction carboxy-S-adenosyl-L-methionine + 5-hydroxyuridine(34) in tRNA = 5-carboxymethoxyuridine(34) in tRNA + S-adenosyl-L-homocysteine + H(+). Its function is as follows. Catalyzes carboxymethyl transfer from carboxy-S-adenosyl-L-methionine (Cx-SAM) to 5-hydroxyuridine (ho5U) to form 5-carboxymethoxyuridine (cmo5U) at position 34 in tRNAs. The sequence is that of tRNA U34 carboxymethyltransferase from Actinobacillus succinogenes (strain ATCC 55618 / DSM 22257 / CCUG 43843 / 130Z).